Reading from the N-terminus, the 65-residue chain is Conotoxin Bu19 (65 aa).

Residues 1–21 (MGMRMVFTVFLLVVLATTVVS) form the signal peptide. A propeptide spanning residues 22-48 (FTSDRASDGRNAAANDKASDLAALAVR) is cleaved from the precursor. Cystine bridges form between Cys-50/Cys-56 and Cys-51/Cys-64. At Cys-64 the chain carries Cysteine amide.

It belongs to the conotoxin A superfamily. Expressed by the venom duct.

The protein resides in the secreted. The chain is Conotoxin Bu19 from Conus bullatus (Bubble cone).